The chain runs to 302 residues: Nucleotide-binding protein SE_0548 (302 aa).

18–25 (GMSGAGKS) provides a ligand contact to ATP. 69–72 (DLRG) contributes to the GTP binding site.

Belongs to the RapZ-like family.

Displays ATPase and GTPase activities. The protein is Nucleotide-binding protein SE_0548 of Staphylococcus epidermidis (strain ATCC 12228 / FDA PCI 1200).